Consider the following 107-residue polypeptide: MTSKTVTRADLASVVCKKVGLSHTESAALVELVLDEICNSLVRGEAVKLSSFATFQVRSKNERIGRNPKTGVEAPIPPRRVVTFKAANILKQRILDSHRAKQKKDLL.

This sequence belongs to the bacterial histone-like protein family. In terms of assembly, heterodimer of an alpha and a beta chain.

This protein is one of the two subunits of integration host factor, a specific DNA-binding protein that functions in genetic recombination as well as in transcriptional and translational control. In Bartonella tribocorum (strain CIP 105476 / IBS 506), this protein is Integration host factor subunit alpha.